The sequence spans 445 residues: FAS-associated factor 2 (445 aa).

Ala2 carries the N-acetylalanine modification. The UBA domain occupies Glu12 to Gln48. An N6-acetyllysine modification is found at Lys167. A coiled-coil region spans residues Ser275–Leu350. The disordered stretch occupies residues Ala299–Ser361. Residues Ala303–Glu348 show a composition bias toward basic and acidic residues. The 83-residue stretch at Asp357–Val439 folds into the UBX domain.

As to quaternary structure, identified in a complex that contains SEL1L, OS9, FAF2/UBXD8, UBE2J1/UBC6E and AUP1. Interacts with YOD1. Interacts (via N-terminus) with UBQLN2 (via C-terminus). Interacts with PNPLA2 and UBAC2. Interacts with ZFAND2B; probably through VCP. Interacts with LMBR1L. As to expression, broadly expressed, with highest levels in brain.

The protein resides in the cytoplasm. Its subcellular location is the lipid droplet. It localises to the endoplasmic reticulum. Functionally, plays an important role in endoplasmic reticulum-associated degradation (ERAD) that mediates ubiquitin-dependent degradation of misfolded endoplasmic reticulum proteins. By controlling the steady-state expression of the IGF1R receptor, indirectly regulates the insulin-like growth factor receptor signaling pathway. Involved in inhibition of lipid droplet degradation by binding to phospholipase PNPL2 and inhibiting its activity by promoting dissociation of PNPL2 from its endogenous activator, ABHD5 which inhibits the rate of triacylglycerol hydrolysis. Involved in stress granule disassembly: associates with ubiquitinated G3BP1 in response to heat shock, thereby promoting interaction between ubiquitinated G3BP1 and VCP, followed by G3BP1 extraction from stress granules and stress granule disassembly. The sequence is that of FAS-associated factor 2 from Homo sapiens (Human).